The primary structure comprises 143 residues: Actin-depolymerizing factor (143 aa).

The ADF-H domain occupies 11-143 (GMGVADHSKN…DLEVLRERAH (133 aa)).

Belongs to the actin-binding proteins ADF family.

Its function is as follows. Actin-depolymerizing protein. Severs actin filaments (F-actin) and binds to actin monomers. This is Actin-depolymerizing factor from Vitis vinifera (Grape).